We begin with the raw amino-acid sequence, 459 residues long: Argininosuccinate lyase (459 aa).

This sequence belongs to the lyase 1 family. Argininosuccinate lyase subfamily.

The protein resides in the cytoplasm. The enzyme catalyses 2-(N(omega)-L-arginino)succinate = fumarate + L-arginine. It participates in amino-acid biosynthesis; L-arginine biosynthesis; L-arginine from L-ornithine and carbamoyl phosphate: step 3/3. This chain is Argininosuccinate lyase, found in Prochlorococcus marinus (strain AS9601).